A 489-amino-acid polypeptide reads, in one-letter code: Fumarate reductase (CoM/CoB) subunit B (489 aa).

Positions 2–89 constitute a 2Fe-2S ferredoxin-type domain; it reads INVKVLRFEP…GAVIEPVDLP (88 aa). [2Fe-2S] cluster is bound by residues Cys-53, Cys-58, Cys-61, and Cys-73. 4Fe-4S ferredoxin-type domains are found at residues 124-158 and 178-209; these read PEDY…YAGP and AAGG…PGDA. [4Fe-4S] cluster is bound by residues Cys-136, Cys-139, Cys-142, Cys-146, Cys-189, Cys-192, Cys-195, and Cys-199.

As to quaternary structure, subunit B of the heterodimeric fumarate reductase of methanogenic Archaea, composed of subunits A (TfrA) and B (TfrB). Requires [2Fe-2S] cluster as cofactor. [4Fe-4S] cluster is required as a cofactor.

It localises to the cytoplasm. The enzyme catalyses coenzyme B + coenzyme M + fumarate = coenzyme M-coenzyme B heterodisulfide + succinate. In terms of biological role, catalyzes the reduction of fumarate with reduced coenzyme M (CoM-S-H) and coenzyme B (CoB-S-H). In vitro, is able to reduces fumarate with reduced benzyl viologen, oxidize CoM-S-H and CoB-S-H to CoM-S-S-CoB with methylene blue, and reduce CoM-S-S-CoB with reduced benzyl viologen. The enzyme has specificity for the two thiol compounds as the CoB--CoM heterodisulfide reductase. The enzyme is very sensitive to oxygen. The protein is Fumarate reductase (CoM/CoB) subunit B of Methanothermobacter marburgensis (strain ATCC BAA-927 / DSM 2133 / JCM 14651 / NBRC 100331 / OCM 82 / Marburg) (Methanobacterium thermoautotrophicum).